The chain runs to 1143 residues: Disease resistance protein Piks-1 (1143 aa).

A structured coiled coil (CC) domain region spans residues 1–190 (MEAAAMAVTA…PLRIMGGEMQ (190 aa)). Residues 189 to 258 (MQKIVFKIPM…KVGPAMFLEV (70 aa)) form the HMA domain. The HMA-like domain stretch occupies residues 191-264 (KIVFKIPMVD…FLEVSQAKED (74 aa)). Residues 282 to 570 (HEVKTICILG…WIAEGFVSEE (289 aa)) enclose the NB-ARC domain. LRR repeat units lie at residues 681 to 706 (FKRL…ICEQ), 708 to 731 (SLRV…MRKL), 732 to 754 (KHLE…IGEL), 756 to 777 (HLRI…IREL), 778 to 800 (QHLH…VGKL), 802 to 823 (NLKI…IGEL), 824 to 848 (NHLQ…QISQ), 945 to 968 (MPNL…INGT), 979 to 1002 (DSRV…EFKF), and 1004 to 1027 (AGPA…VFRC).

Belongs to the disease resistance NB-LRR family. As to quaternary structure, interacts with AVR-Pik through its N-terminal part containing the HMA-like domain.

In terms of biological role, disease resistance (R) protein that specifically recognizes the AVR-Pik effector avirulence protein from M.oryzae. Resistance proteins guard the plant against pathogens that contain an appropriate avirulence protein via an indirect interaction with this avirulence protein. That triggers a defense system including the hypersensitive response, which restricts the pathogen growth. In Oryza sativa subsp. japonica (Rice), this protein is Disease resistance protein Piks-1.